The chain runs to 135 residues: MAAAIDGSLPVCRQSAALIDGVHTDFLASWYSDRILVLVTQFQKFGTLVSVTRDQPVARPDQAQGGTDSHTFTTKVLMGDDLPIWHVYGQQIFKAINGEDGCKPVLVAIALQNHSPEILKCILGQLESIRQVQTP.

The protein belongs to the PSMG3 family.

Chaperone protein which promotes assembly of the 20S proteasome. May cooperate with psmg1-psmg2 heterodimers to orchestrate the correct assembly of proteasomes. This chain is Proteasome assembly chaperone 3 (psmg3), found in Nematostella vectensis (Starlet sea anemone).